The following is a 90-amino-acid chain: Small ribosomal subunit protein uS15 (90 aa).

This sequence belongs to the universal ribosomal protein uS15 family. In terms of assembly, part of the 30S ribosomal subunit. Forms a bridge to the 50S subunit in the 70S ribosome, contacting the 23S rRNA.

In terms of biological role, one of the primary rRNA binding proteins, it binds directly to 16S rRNA where it helps nucleate assembly of the platform of the 30S subunit by binding and bridging several RNA helices of the 16S rRNA. Its function is as follows. Forms an intersubunit bridge (bridge B4) with the 23S rRNA of the 50S subunit in the ribosome. This Campylobacter concisus (strain 13826) protein is Small ribosomal subunit protein uS15.